We begin with the raw amino-acid sequence, 209 residues long: NADH-ubiquinone oxidoreductase subunit 9 (209 aa).

This sequence belongs to the complex I 30 kDa subunit family. As to quaternary structure, complex I is composed of about 45 different subunits.

Its subcellular location is the mitochondrion inner membrane. The catalysed reaction is a ubiquinone + NADH + 5 H(+)(in) = a ubiquinol + NAD(+) + 4 H(+)(out). Functionally, core subunit of the mitochondrial membrane respiratory chain NADH dehydrogenase (Complex I) that is believed to belong to the minimal assembly required for catalysis. Complex I functions in the transfer of electrons from NADH to the respiratory chain. The immediate electron acceptor for the enzyme is believed to be ubiquinone. In Dictyostelium discoideum (Social amoeba), this protein is NADH-ubiquinone oxidoreductase subunit 9 (nad9).